The following is a 339-amino-acid chain: MNQRNASMTVIGAGSYGTALAITLARNGHEVVLWGHDPEHIATLERDRCNAAFLPDVPFPDTLHLESDLATALAASRNILVVVPSHVFGEVLRQIKPLMRPDARLVWATKGLEAETGRLLQDVAREALGDHIPLAVISGPTFAKELAAGLPTAISLASTDQTFADDLQQLLHCGKSFRVYSNPDFIGVQLGGAVKNVIAIGAGMSDGIGFGANARTALITRGLAEMSRLGAALGADPATFMGMAGLGDLVLTCTDNQSRNRRFGMMLGQGMDVQSAQEKIGQVVEGYRNTKEVRELAHRFGVEMPITEEIYQVLYCGKNAREAALTLLGRARKDERSSH.

NADPH-binding residues include S15, Y16, H36, and K110. Sn-glycerol 3-phosphate contacts are provided by K110, G139, and T141. NADPH is bound at residue A143. K195, D248, S258, R259, and N260 together coordinate sn-glycerol 3-phosphate. Residue K195 is the Proton acceptor of the active site. Position 259 (R259) interacts with NADPH. Residues V283 and E285 each coordinate NADPH.

The protein belongs to the NAD-dependent glycerol-3-phosphate dehydrogenase family.

The protein resides in the cytoplasm. It carries out the reaction sn-glycerol 3-phosphate + NAD(+) = dihydroxyacetone phosphate + NADH + H(+). It catalyses the reaction sn-glycerol 3-phosphate + NADP(+) = dihydroxyacetone phosphate + NADPH + H(+). It participates in membrane lipid metabolism; glycerophospholipid metabolism. Its function is as follows. Catalyzes the reduction of the glycolytic intermediate dihydroxyacetone phosphate (DHAP) to sn-glycerol 3-phosphate (G3P), the key precursor for phospholipid synthesis. In Escherichia coli O17:K52:H18 (strain UMN026 / ExPEC), this protein is Glycerol-3-phosphate dehydrogenase [NAD(P)+].